The following is a 369-amino-acid chain: Phosphoserine aminotransferase (369 aa).

An L-glutamate-binding site is contributed by R42. Pyridoxal 5'-phosphate-binding residues include W101, T152, D176, and Q199. At K200 the chain carries N6-(pyridoxal phosphate)lysine. 241 to 242 (NT) provides a ligand contact to pyridoxal 5'-phosphate.

It belongs to the class-V pyridoxal-phosphate-dependent aminotransferase family. SerC subfamily. Homodimer. It depends on pyridoxal 5'-phosphate as a cofactor.

The protein resides in the cytoplasm. The catalysed reaction is O-phospho-L-serine + 2-oxoglutarate = 3-phosphooxypyruvate + L-glutamate. The enzyme catalyses 4-(phosphooxy)-L-threonine + 2-oxoglutarate = (R)-3-hydroxy-2-oxo-4-phosphooxybutanoate + L-glutamate. Its pathway is amino-acid biosynthesis; L-serine biosynthesis; L-serine from 3-phospho-D-glycerate: step 2/3. The protein operates within cofactor biosynthesis; pyridoxine 5'-phosphate biosynthesis; pyridoxine 5'-phosphate from D-erythrose 4-phosphate: step 3/5. Its function is as follows. Catalyzes the reversible conversion of 3-phosphohydroxypyruvate to phosphoserine and of 3-hydroxy-2-oxo-4-phosphonooxybutanoate to phosphohydroxythreonine. This chain is Phosphoserine aminotransferase, found in Delftia acidovorans (strain DSM 14801 / SPH-1).